A 601-amino-acid polypeptide reads, in one-letter code: Elongation factor 4 (601 aa).

A tr-type G domain is found at 5–187 (DKIRNFSIIA…SIVKDLPAPQ (183 aa)). GTP contacts are provided by residues 17–22 (DHGKST) and 134–137 (NKVD).

The protein belongs to the TRAFAC class translation factor GTPase superfamily. Classic translation factor GTPase family. LepA subfamily.

It is found in the cell inner membrane. The enzyme catalyses GTP + H2O = GDP + phosphate + H(+). In terms of biological role, required for accurate and efficient protein synthesis under certain stress conditions. May act as a fidelity factor of the translation reaction, by catalyzing a one-codon backward translocation of tRNAs on improperly translocated ribosomes. Back-translocation proceeds from a post-translocation (POST) complex to a pre-translocation (PRE) complex, thus giving elongation factor G a second chance to translocate the tRNAs correctly. Binds to ribosomes in a GTP-dependent manner. This Maridesulfovibrio salexigens (strain ATCC 14822 / DSM 2638 / NCIMB 8403 / VKM B-1763) (Desulfovibrio salexigens) protein is Elongation factor 4.